A 208-amino-acid chain; its full sequence is Small ribosomal subunit protein uS4 (208 aa).

An S4 RNA-binding domain is found at 98-158 (RRLDNIAYRL…EKSRKVACIN (61 aa)).

Belongs to the universal ribosomal protein uS4 family. In terms of assembly, part of the 30S ribosomal subunit. Contacts protein S5. The interaction surface between S4 and S5 is involved in control of translational fidelity.

Its function is as follows. One of the primary rRNA binding proteins, it binds directly to 16S rRNA where it nucleates assembly of the body of the 30S subunit. Functionally, with S5 and S12 plays an important role in translational accuracy. This Geotalea uraniireducens (strain Rf4) (Geobacter uraniireducens) protein is Small ribosomal subunit protein uS4.